The chain runs to 690 residues: Putative glycerophosphocholine phosphodiesterase GPCPD1 homolog 1 (690 aa).

Positions 1–122 (MDQDYKAHFK…RKNITDQFGS (122 aa)) constitute a CBM20 domain. Residues 344–654 (MLQIGHRGMG…DRIGEDEVLK (311 aa)) enclose the GP-PDE domain. Positions 670–690 (ARSQHNSRSPSMSRRCMSTVE) are disordered. Positions 676 to 690 (SRSPSMSRRCMSTVE) are enriched in low complexity.

This sequence belongs to the glycerophosphoryl diester phosphodiesterase family.

The protein is Putative glycerophosphocholine phosphodiesterase GPCPD1 homolog 1 of Caenorhabditis elegans.